We begin with the raw amino-acid sequence, 294 residues long: Keratin-like protein KRT222 (294 aa).

The IF rod domain occupies 1-150 (MELSQLLNEI…RLLEQEEIRY (150 aa)). The stretch at 1–151 (MELSQLLNEI…LLEQEEIRYY (151 aa)) forms a coiled coil.

It belongs to the intermediate filament family.

The protein is Keratin-like protein KRT222 (Krt222) of Mus musculus (Mouse).